We begin with the raw amino-acid sequence, 1274 residues long: DENN domain-containing protein 5B (1274 aa).

Residue Ser2 is modified to N-acetylserine. Residues 39–244 (DELAGENFDQ…EVPLPPPGRS (206 aa)) form the uDENN domain. Ser49 and Ser178 each carry phosphoserine. In terms of domain architecture, cDENN spans 263–399 (ELPLSDYPLR…VDFIQELSEV (137 aa)). Residues 401-581 (LQFGIPPEGS…DNKIMSQWEE (181 aa)) form the dDENN domain. The region spanning 772-932 (LEENTLIASL…DYFCFTSVFT (161 aa)) is the RUN 1 domain. Ser822 bears the Phosphoserine mark. The chain crosses the membrane as a helical span at residues 916 to 936 (LLSLNAVDYFCFTSVFTTIMI). The PLAT domain maps to 936-1044 (IPYRSVIIPI…DDGSLERILI (109 aa)). Thr1062 carries the phosphothreonine modification. Phosphoserine is present on residues Ser1068, Ser1076, and Ser1079. Residues 1118–1267 (TVLLCGENGL…QDFTIVLEGS (150 aa)) form the RUN 2 domain.

The protein belongs to the RAB6IP1 family.

It localises to the membrane. Its function is as follows. Guanine nucleotide exchange factor (GEF) which may activate RAB39A and/or RAB39B. Promotes the exchange of GDP to GTP, converting inactive GDP-bound Rab proteins into their active GTP-bound form. This is DENN domain-containing protein 5B (Dennd5b) from Mus musculus (Mouse).